We begin with the raw amino-acid sequence, 128 residues long: uncharacterized protein (128 aa).

The chain crosses the membrane as a helical span at residues Y8–Y28.

It is found in the membrane. This is an uncharacterized protein from Haemophilus influenzae (strain ATCC 51907 / DSM 11121 / KW20 / Rd).